The primary structure comprises 274 residues: Ribonucleoside-diphosphate reductase small chain (274 aa).

Residues Asp-70, Glu-101, and His-104 each contribute to the Fe cation site. Residue Tyr-108 is part of the active site. The Fe cation site is built by Glu-163, Glu-197, and His-200.

Belongs to the ribonucleoside diphosphate reductase small chain family. In terms of assembly, heterodimer of a large and a small chain. It depends on Fe cation as a cofactor.

The enzyme catalyses a 2'-deoxyribonucleoside 5'-diphosphate + [thioredoxin]-disulfide + H2O = a ribonucleoside 5'-diphosphate + [thioredoxin]-dithiol. Ribonucleoside-diphosphate reductase holoenzyme provides the precursors necessary for viral DNA synthesis. Allows virus growth in non-dividing cells. Catalyzes the biosynthesis of deoxyribonucleotides from the corresponding ribonucleotides. The sequence is that of Ribonucleoside-diphosphate reductase small chain from Sus scrofa (Pig).